Reading from the N-terminus, the 428-residue chain is Probable glucose-6-phosphate isomerase (428 aa).

The active-site Proton donor is Glu-269. Active-site residues include His-290 and Lys-401.

This sequence belongs to the GPI family.

It localises to the cytoplasm. The enzyme catalyses alpha-D-glucose 6-phosphate = beta-D-fructose 6-phosphate. Its pathway is carbohydrate biosynthesis; gluconeogenesis. The protein operates within carbohydrate degradation; glycolysis; D-glyceraldehyde 3-phosphate and glycerone phosphate from D-glucose: step 2/4. Its function is as follows. Catalyzes the reversible isomerization of glucose-6-phosphate to fructose-6-phosphate. The polypeptide is Probable glucose-6-phosphate isomerase (Natronomonas pharaonis (strain ATCC 35678 / DSM 2160 / CIP 103997 / JCM 8858 / NBRC 14720 / NCIMB 2260 / Gabara) (Halobacterium pharaonis)).